We begin with the raw amino-acid sequence, 211 residues long: UPF0502 protein PC1_1804 (211 aa).

A disordered region spans residues 168-188 (SGDASDAAPEEEGAGDNSHQL).

Belongs to the UPF0502 family.

The protein is UPF0502 protein PC1_1804 of Pectobacterium carotovorum subsp. carotovorum (strain PC1).